Reading from the N-terminus, the 473-residue chain is Bifunctional protein HldE (473 aa).

Residues 1 to 316 (MILPDFSLAR…AIAIHGQRAP (316 aa)) form a ribokinase region. An ATP-binding site is contributed by 193–196 (NLSE). Aspartate 262 is a catalytic residue. The tract at residues 342–473 (VTNGCFDLLH…TRIIEAIRNG (132 aa)) is cytidylyltransferase.

This sequence in the N-terminal section; belongs to the carbohydrate kinase PfkB family. It in the C-terminal section; belongs to the cytidylyltransferase family. As to quaternary structure, homodimer.

The enzyme catalyses D-glycero-beta-D-manno-heptose 7-phosphate + ATP = D-glycero-beta-D-manno-heptose 1,7-bisphosphate + ADP + H(+). It catalyses the reaction D-glycero-beta-D-manno-heptose 1-phosphate + ATP + H(+) = ADP-D-glycero-beta-D-manno-heptose + diphosphate. Its pathway is nucleotide-sugar biosynthesis; ADP-L-glycero-beta-D-manno-heptose biosynthesis; ADP-L-glycero-beta-D-manno-heptose from D-glycero-beta-D-manno-heptose 7-phosphate: step 1/4. It functions in the pathway nucleotide-sugar biosynthesis; ADP-L-glycero-beta-D-manno-heptose biosynthesis; ADP-L-glycero-beta-D-manno-heptose from D-glycero-beta-D-manno-heptose 7-phosphate: step 3/4. In terms of biological role, catalyzes the phosphorylation of D-glycero-D-manno-heptose 7-phosphate at the C-1 position to selectively form D-glycero-beta-D-manno-heptose-1,7-bisphosphate. Its function is as follows. Catalyzes the ADP transfer from ATP to D-glycero-beta-D-manno-heptose 1-phosphate, yielding ADP-D-glycero-beta-D-manno-heptose. In Methylococcus capsulatus (strain ATCC 33009 / NCIMB 11132 / Bath), this protein is Bifunctional protein HldE.